The sequence spans 103 residues: NADH-quinone oxidoreductase subunit K (103 aa).

3 consecutive transmembrane segments (helical) span residues 1–21 (MIVPLSHVLAVAALLFAVGGV), 29–49 (ILLILIGVEFMLAAAGLAFAG), and 62–82 (AVIIIMGLASAEAGLGLALLV). The interval 84 to 103 (GRRGGGTDRADSYDRLGEES) is disordered. Residues 88–103 (GGTDRADSYDRLGEES) show a composition bias toward basic and acidic residues.

It belongs to the complex I subunit 4L family. NDH-1 is composed of 14 different subunits. Subunits NuoA, H, J, K, L, M, N constitute the membrane sector of the complex.

The protein localises to the cell inner membrane. It catalyses the reaction a quinone + NADH + 5 H(+)(in) = a quinol + NAD(+) + 4 H(+)(out). In terms of biological role, NDH-1 shuttles electrons from NADH, via FMN and iron-sulfur (Fe-S) centers, to quinones in the respiratory chain. The immediate electron acceptor for the enzyme in this species is believed to be ubiquinone. Couples the redox reaction to proton translocation (for every two electrons transferred, four hydrogen ions are translocated across the cytoplasmic membrane), and thus conserves the redox energy in a proton gradient. This is NADH-quinone oxidoreductase subunit K from Solidesulfovibrio magneticus (strain ATCC 700980 / DSM 13731 / RS-1) (Desulfovibrio magneticus).